The chain runs to 530 residues: Structure-specific endonuclease subunit SLX1 homolog 2 (530 aa).

Residues Arg-4–Gln-89 form the GIY-YIG domain. An SLX1-type zinc finger spans residues Cys-232–Cys-365. Disordered regions lie at residues Ala-276 to His-306, Asn-410 to Asp-438, and Leu-474 to Asp-502. Over residues Arg-283–Ser-298 the composition is skewed to basic and acidic residues.

It belongs to the SLX1 family. In terms of assembly, forms a heterodimer with a member of the SLX4 family. A divalent metal cation serves as cofactor.

It is found in the nucleus. Its function is as follows. Catalytic subunit of a heterodimeric structure-specific endonuclease that resolves DNA secondary structures generated during DNA repair and recombination. Has endonuclease activity towards branched DNA substrates, introducing single-strand cuts in duplex DNA close to junctions with ss-DNA. The chain is Structure-specific endonuclease subunit SLX1 homolog 2 from Trypanosoma cruzi (strain CL Brener).